The sequence spans 1015 residues: Putative helicase mov-10-B.2 (1015 aa).

The interval 94 to 130 (QWFRPRRRQQNQANATPGNVSSVTPSSDQGPSCPESG) is disordered. A compositionally biased stretch (polar residues) spans 109–123 (TPGNVSSVTPSSDQG). 555-562 (GPPGTGKT) serves as a coordination point for ATP. Positions 677–680 (DEAG) match the DEAG box motif.

It belongs to the DNA2/NAM7 helicase family. SDE3 subfamily.

It is found in the cytoplasm. The protein resides in the P-body. The enzyme catalyses ATP + H2O = ADP + phosphate + H(+). Functionally, probable RNA helicase. Required for RNA-mediated gene silencing by the RNA-induced silencing complex (RISC). Required for both miRNA-mediated translational repression and miRNA-mediated cleavage of complementary mRNAs by RISC. This is Putative helicase mov-10-B.2 (mov10b.2) from Danio rerio (Zebrafish).